The sequence spans 165 residues: MPAESTFDIVSDFDRQELINAVDQARREVATRYDLKDTKTEIVLSEKELTITTESEMHLTAVRDLIQTRALRRNLSIKIFKFGPIQEVSGGRVRQVALLQRGIPEDVAKKLAKLIRDHFPKVQPRIQGDVLRVGSKSRDELQAVIRLVKEHQDEFAIPLQFTNYR.

The protein belongs to the YajQ family.

Nucleotide-binding protein. The sequence is that of Nucleotide-binding protein RoseRS_0530 from Roseiflexus sp. (strain RS-1).